Reading from the N-terminus, the 511-residue chain is Probable G-protein coupled receptor 152 (511 aa).

A disordered region spans residues 1-20 (MDTAVEANLGAAGHGPRTEL). Over 1-33 (MDTAVEANLGAAGHGPRTELSDEDYYPQGSWDT) the chain is Extracellular. The helical transmembrane segment at 34–54 (VFLVALLLLGLPANGLMAWLA) threads the bilayer. The Cytoplasmic portion of the chain corresponds to 55–65 (GSQARHGAGTR). The helical transmembrane segment at 66-86 (LALLLLSLALSDFLFLAAATF) threads the bilayer. The Extracellular portion of the chain corresponds to 87-105 (QILEIQHGGHWPLGTAACR). Cys104 and Cys182 form a disulfide bridge. A helical transmembrane segment spans residues 106–126 (FYYFLWGVSYSSGLFLLTALS). Over 127–148 (LDRCLLALCPRWYPGHRPARLP) the chain is Cytoplasmic. A helical transmembrane segment spans residues 149-169 (LWVCAGVWVLATLFSVPWLVF). The Extracellular segment spans residues 170-194 (PEAAVWWYDLVICLDFWDTEELPLR). The helical transmembrane segment at 195–215 (MLEILGGFLPFLLLLVCHVLT) threads the bilayer. The Cytoplasmic segment spans residues 216–258 (QATACRTCCGHQPRRMACHGFARVAKTILSAYVVLRLPYQLAQ). Residues 259–279 (LLYLAFLWDVYPGYLLWEALV) form a helical membrane-spanning segment. Residues 280–282 (YSD) are Extracellular-facing. Residues 283–303 (YLILLNSCLSPFLCLAASADL) form a helical membrane-spanning segment. Residues 304–511 (RALLRTVLSS…PEEAPSAGPT (208 aa)) are Cytoplasmic-facing. Disordered regions lie at residues 328–349 (PAEP…DSVV), 361–386 (SDSV…PTVG), and 407–511 (PQLD…AGPT). 2 stretches are compositionally biased toward polar residues: residues 335-345 (PGPTSEGQSRL) and 369-386 (VSPS…PTVG). The span at 419–433 (PSAQPQSKSVVQPQV) shows a compositional bias: low complexity. Composition is skewed to polar residues over residues 435–453 (PLTQ…NTET) and 462–473 (SASNPGEENSSG).

This sequence belongs to the G-protein coupled receptor 1 family.

Its subcellular location is the cell membrane. Its function is as follows. Orphan receptor. The protein is Probable G-protein coupled receptor 152 (Gpr152) of Mus musculus (Mouse).